A 338-amino-acid polypeptide reads, in one-letter code: uncharacterized protein (338 aa).

Positions 1-29 are cleaved as a signal peptide; the sequence is MIKQLYKNITICTLALSTTFTVLPATSYA.

Belongs to the aerolysin family.

This is an uncharacterized protein from Staphylococcus aureus (strain MSSA476).